The sequence spans 445 residues: UDP-N-acetylglucosamine--peptide N-acetylglucosaminyltransferase stabilizing protein GtfB (445 aa).

Residues 55 to 171 (KPLYFNQVPV…TLPGQSMRYF (117 aa)) are glycosyltransferase 1.

This sequence belongs to the GtfB family. Interacts with glycosyltransferase GtfA; probably forms a heterotetramer with 2 subunits each of GtfA and GtfB. Part of the accessory SecA2/SecY2 protein translocation apparatus.

Its subcellular location is the cell membrane. It functions in the pathway protein modification; protein glycosylation. Functionally, required for the polymorphic O-glycosylation of the serine-rich repeat protein PsrP. A stabilizing protein that is part of the accessory SecA2/SecY2 system specifically required to export serine-rich repeat cell wall proteins encoded upstream in the same operon. The GtfA-GtfB complex adds GlcNAc from UDP-GlcNAc to PsrP, attaching the first sugar residue. Stabilizes the glycosylation activity of GtfA. Has no N-acetylglucosaminyl transferase activity on its own. In Streptococcus pneumoniae serotype 4 (strain ATCC BAA-334 / TIGR4), this protein is UDP-N-acetylglucosamine--peptide N-acetylglucosaminyltransferase stabilizing protein GtfB.